Here is a 148-residue protein sequence, read N- to C-terminus: Globin, monomeric component M-IV (148 aa).

In terms of domain architecture, Globin spans 2 to 147; it reads GLSAAQRQVV…ISGALISGLQ (146 aa). H91 lines the heme b pocket.

In terms of assembly, monomer.

In Glycera dibranchiata (Bloodworm), this protein is Globin, monomeric component M-IV.